The chain runs to 107 residues: Iron-binding protein IscA (107 aa).

Cys-35, Cys-99, and Cys-101 together coordinate Fe cation.

The protein belongs to the HesB/IscA family. Homodimer; may form tetramers and higher multimers. Fe cation is required as a cofactor.

Functionally, is able to transfer iron-sulfur clusters to apo-ferredoxin. Multiple cycles of [2Fe2S] cluster formation and transfer are observed, suggesting that IscA acts catalytically. Recruits intracellular free iron so as to provide iron for the assembly of transient iron-sulfur cluster in IscU in the presence of IscS, L-cysteine and the thioredoxin reductase system TrxA/TrxB. The sequence is that of Iron-binding protein IscA from Pectobacterium carotovorum subsp. carotovorum (strain PC1).